Consider the following 252-residue polypeptide: Hydroxyacylglutathione hydrolase (252 aa).

Residues H54, H56, D58, H59, H111, D128, and H166 each coordinate Zn(2+).

This sequence belongs to the metallo-beta-lactamase superfamily. Glyoxalase II family. Monomer. The cofactor is Zn(2+).

The enzyme catalyses an S-(2-hydroxyacyl)glutathione + H2O = a 2-hydroxy carboxylate + glutathione + H(+). Its pathway is secondary metabolite metabolism; methylglyoxal degradation; (R)-lactate from methylglyoxal: step 2/2. Thiolesterase that catalyzes the hydrolysis of S-D-lactoyl-glutathione to form glutathione and D-lactic acid. In Photobacterium profundum (strain SS9), this protein is Hydroxyacylglutathione hydrolase.